The following is a 337-amino-acid chain: Inositol 2-dehydrogenase (337 aa).

It belongs to the Gfo/Idh/MocA family. As to quaternary structure, homotetramer.

It carries out the reaction myo-inositol + NAD(+) = scyllo-inosose + NADH + H(+). Involved in the oxidation of myo-inositol (MI) to 2-keto-myo-inositol (2KMI or 2-inosose). The chain is Inositol 2-dehydrogenase from Corynebacterium glutamicum (strain ATCC 13032 / DSM 20300 / JCM 1318 / BCRC 11384 / CCUG 27702 / LMG 3730 / NBRC 12168 / NCIMB 10025 / NRRL B-2784 / 534).